Consider the following 129-residue polypeptide: uncharacterized protein (129 aa).

Over residues 86–96 the composition is skewed to acidic residues; it reads NDGFSSDDEPE. The segment at 86-116 is disordered; it reads NDGFSSDDEPEEHVILTEDNQGEPSETPQAT. The segment covering 103 to 116 has biased composition (polar residues); that stretch reads EDNQGEPSETPQAT.

The protein belongs to the asfivirus D129L family.

This is an uncharacterized protein from African swine fever virus (strain Badajoz 1971 Vero-adapted) (Ba71V).